A 24-amino-acid polypeptide reads, in one-letter code: Unknown protein NF004 from 2D-PAGE (24 aa).

This Naegleria fowleri (Brain eating amoeba) protein is Unknown protein NF004 from 2D-PAGE.